Consider the following 622-residue polypeptide: Signal recognition particle subunit SRP68 (622 aa).

A disordered region spans residues R576–K622. The span at K585–K595 shows a compositional bias: low complexity.

It belongs to the SRP68 family. In terms of assembly, heterodimer with srpa-72. Srpa-68/srpa-72 heterodimer formation is stabilized by the presence of 7SL RNA. Component of a signal recognition particle (SRP) complex that consists of a 7SL RNA molecule of 300 nucleotides and six protein subunits: srpa-72, srpa-68, SRP54, F37F2.2/SRP19, F25G6.8/SRP14 and ZK512.4/SRP9. Within the SRP complex, interacts (via C-terminus) with srpa-72 (via N-terminus).

The protein localises to the cytoplasm. Its subcellular location is the nucleus. The protein resides in the nucleolus. It localises to the endoplasmic reticulum. Component of the signal recognition particle (SRP) complex, a ribonucleoprotein complex that mediates the cotranslational targeting of secretory and membrane proteins to the endoplasmic reticulum (ER). The SRP complex interacts with the signal sequence in nascent secretory and membrane proteins and directs them to the membrane of the ER. The SRP complex targets the ribosome-nascent chain complex to the SRP receptor (SR), which is anchored in the ER, where SR compaction and GTPase rearrangement drive cotranslational protein translocation into the ER. Binds the signal recognition particle RNA (7SL RNA), srpa-72 binds to this complex subsequently. The SRP complex possibly participates in the elongation arrest function. The protein is Signal recognition particle subunit SRP68 of Caenorhabditis elegans.